Reading from the N-terminus, the 206-residue chain is MSFLTEWLTTIVLFILFAIVIDMLLPSSSMQKYAKMVVSLLLIVVMLTPIFKLFKTDPEVIFEYLTKNGQSESADIKNQINSKKIEIQASQRAYILEEMAVQLKKKAEERFSHDEYKVGRIKLTAGEKVDSEEDIKTISVYMAPSSEKTVQTVAPVHIDTDHAYVTKEAAEQKEAKQIQTQLADIWEIGSEKITVHMEGGESVGNE.

The next 2 membrane-spanning stretches (helical) occupy residues 1–21 and 34–54; these read MSFLTEWLTTIVLFILFAIVI and AKMVVSLLLIVVMLTPIFKLF.

It localises to the cell membrane. The sequence is that of Stage III sporulation protein AF (spoIIIAF) from Bacillus subtilis (strain 168).